The sequence spans 307 residues: Myeloid-associated differentiation marker-like protein 2 (307 aa).

MARVEL domains are found at residues 17–154 (AVTS…ARPG) and 159–303 (YMAT…RIRF). Transmembrane regions (helical) follow at residues 53–73 (FCMA…ACEF), 90–110 (AFAM…PLYF), 129–149 (LAAS…VALT), 163–183 (VSGL…GALV), 198–218 (VAVY…SVMG), 229–249 (RLVV…AVIW), and 278–298 (LVVA…LAYS).

The protein belongs to the MAL family.

It localises to the membrane. The sequence is that of Myeloid-associated differentiation marker-like protein 2 (MYADML2) from Homo sapiens (Human).